A 159-amino-acid polypeptide reads, in one-letter code: Transcription elongation factor GreA (159 aa).

Residues 46–73 (AEYHAAKEEQSFVEGRIKEIELKLSRMQ) adopt a coiled-coil conformation.

It belongs to the GreA/GreB family.

Its function is as follows. Necessary for efficient RNA polymerase transcription elongation past template-encoded arresting sites. The arresting sites in DNA have the property of trapping a certain fraction of elongating RNA polymerases that pass through, resulting in locked ternary complexes. Cleavage of the nascent transcript by cleavage factors such as GreA or GreB allows the resumption of elongation from the new 3'terminus. GreA releases sequences of 2 to 3 nucleotides. The chain is Transcription elongation factor GreA from Vesicomyosocius okutanii subsp. Calyptogena okutanii (strain HA).